The chain runs to 105 residues: Urease subunit beta (105 aa).

It belongs to the urease beta subunit family. As to quaternary structure, heterotrimer of UreA (gamma), UreB (beta) and UreC (alpha) subunits. Three heterotrimers associate to form the active enzyme.

Its subcellular location is the cytoplasm. It carries out the reaction urea + 2 H2O + H(+) = hydrogencarbonate + 2 NH4(+). Its pathway is nitrogen metabolism; urea degradation; CO(2) and NH(3) from urea (urease route): step 1/1. This is Urease subunit beta from Pseudomonas entomophila (strain L48).